A 626-amino-acid polypeptide reads, in one-letter code: Cysteine desulfurase (626 aa).

Disordered regions lie at residues 1–21 (MTNTVPSVPAVPNLPTQSDPF) and 41–64 (AGVSEAESAPTPLSVPTPALPTTS). The tract at residues 1–225 (MTNTVPSVPA…AGAVGFDIHQ (225 aa)) is cargo-loading domain. The segment at 226 to 626 (VRRDFPILQE…RRIQTGSLAL (401 aa)) is cysteine desulfurase domain. Position 444 is an N6-(pyridoxal phosphate)lysine (K444). C582 functions as the Cysteine persulfide intermediate in the catalytic mechanism.

Belongs to the class-V pyridoxal-phosphate-dependent aminotransferase family. Csd subfamily. There are 1-2 copies of this protein in each type 2A encapsulin shell. Pyridoxal 5'-phosphate serves as cofactor.

The protein localises to the encapsulin nanocompartment. It catalyses the reaction (sulfur carrier)-H + L-cysteine = (sulfur carrier)-SH + L-alanine. With respect to regulation, encapsulated enzyme is 7-fold more active than encapsulated enzyme. In terms of biological role, cargo protein of a type 2A encapsulin nanocompartment probably involved in sulfur metabolism. Cysteine desulfurases mobilize the sulfur from L-cysteine to yield L-alanine, an essential step in sulfur metabolism for biosynthesis of a variety of sulfur-containing biomolecules. The polypeptide is Cysteine desulfurase (Synechococcus elongatus (strain ATCC 33912 / PCC 7942 / FACHB-805) (Anacystis nidulans R2)).